The following is a 120-amino-acid chain: Large ribosomal subunit protein bL19c (120 aa).

The protein belongs to the bacterial ribosomal protein bL19 family.

It is found in the plastid. The protein localises to the chloroplast. This Thalassiosira pseudonana (Marine diatom) protein is Large ribosomal subunit protein bL19c.